We begin with the raw amino-acid sequence, 106 residues long: Small ribosomal subunit protein uS10 (106 aa).

The protein belongs to the universal ribosomal protein uS10 family. As to quaternary structure, part of the 30S ribosomal subunit.

Its function is as follows. Involved in the binding of tRNA to the ribosomes. In Prochlorococcus marinus (strain MIT 9211), this protein is Small ribosomal subunit protein uS10.